Consider the following 241-residue polypeptide: 1-(5-phosphoribosyl)-5-[(5-phosphoribosylamino)methylideneamino] imidazole-4-carboxamide isomerase (241 aa).

Residue Asp8 is the Proton acceptor of the active site. Residue Asp129 is the Proton donor of the active site.

This sequence belongs to the HisA/HisF family.

Its subcellular location is the cytoplasm. It carries out the reaction 1-(5-phospho-beta-D-ribosyl)-5-[(5-phospho-beta-D-ribosylamino)methylideneamino]imidazole-4-carboxamide = 5-[(5-phospho-1-deoxy-D-ribulos-1-ylimino)methylamino]-1-(5-phospho-beta-D-ribosyl)imidazole-4-carboxamide. The protein operates within amino-acid biosynthesis; L-histidine biosynthesis; L-histidine from 5-phospho-alpha-D-ribose 1-diphosphate: step 4/9. This Chloroflexus aggregans (strain MD-66 / DSM 9485) protein is 1-(5-phosphoribosyl)-5-[(5-phosphoribosylamino)methylideneamino] imidazole-4-carboxamide isomerase.